A 61-amino-acid polypeptide reads, in one-letter code: Small ribosomal subunit protein uS14 (61 aa).

Residues Cys24, Cys27, Cys40, and Cys43 each contribute to the Zn(2+) site.

Belongs to the universal ribosomal protein uS14 family. Zinc-binding uS14 subfamily. As to quaternary structure, part of the 30S ribosomal subunit. Contacts proteins S3 and S10. The cofactor is Zn(2+).

In terms of biological role, binds 16S rRNA, required for the assembly of 30S particles and may also be responsible for determining the conformation of the 16S rRNA at the A site. The chain is Small ribosomal subunit protein uS14 from Dictyoglomus turgidum (strain DSM 6724 / Z-1310).